The following is a 454-amino-acid chain: Glutamyl-tRNA(Gln) amidotransferase subunit A (454 aa).

Residues Lys-56 and Ser-131 each act as charge relay system in the active site. Ser-155 functions as the Acyl-ester intermediate in the catalytic mechanism.

The protein belongs to the amidase family. GatA subfamily. In terms of assembly, heterotrimer of A, B and C subunits.

It catalyses the reaction L-glutamyl-tRNA(Gln) + L-glutamine + ATP + H2O = L-glutaminyl-tRNA(Gln) + L-glutamate + ADP + phosphate + H(+). Allows the formation of correctly charged Gln-tRNA(Gln) through the transamidation of misacylated Glu-tRNA(Gln) in organisms which lack glutaminyl-tRNA synthetase. The reaction takes place in the presence of glutamine and ATP through an activated gamma-phospho-Glu-tRNA(Gln). The sequence is that of Glutamyl-tRNA(Gln) amidotransferase subunit A from Campylobacter lari (strain RM2100 / D67 / ATCC BAA-1060).